Here is a 461-residue protein sequence, read N- to C-terminus: CUGBP Elav-like family member 3 (461 aa).

RRM domains follow at residues 7-88 (IKLF…PADS) and 95-175 (RKLF…FADT). Residues 345–358 (PPALVAQQPPPPPQ) show a composition bias toward pro residues. The disordered stretch occupies residues 345–375 (PPALVAQQPPPPPQQQQQQQQQQQQREGPDG). Over residues 359 to 369 (QQQQQQQQQQQ) the composition is skewed to low complexity. In terms of domain architecture, RRM 3 spans 376–454 (CNIFIYHLPQ…KRLKVQLKRP (79 aa)).

It belongs to the CELF/BRUNOL family.

It localises to the nucleus. It is found in the cytoplasm. Its function is as follows. RNA-binding protein involved in the regulation of pre-mRNA alternative splicing. Mediates exon inclusion and/or exclusion in pre-mRNA that are subject to tissue-specific and developmentally regulated alternative splicing. Specifically activates exon 5 inclusion of cardiac isoforms of TNNT2 during heart remodeling at the juvenile to adult transition. Activates the splicing of MAPT/Tau exon 10. Binds to muscle-specific splicing enhancer (MSE) intronic sites flanking the alternative exon 5 of TNNT2 pre-mRNA. The sequence is that of CUGBP Elav-like family member 3 (CELF3) from Bos taurus (Bovine).